A 311-amino-acid chain; its full sequence is MALPILLDCDPGHDDAIAIVLALASPELDVKAITSSAGNQTPEKTLRNVLCMLTLLNRTDIPVASGAVKPLMRDLIIADNVHGESGLDGPALPEPTFAPQNCTAVELMAKTLCESEEPVTIVSTGPQTNVALLLNSHPELHSKIARIVIMGGAMGLGNWTPAAEFNIYVDPEAAEIVFQSGIPVVMAGLDVTHKAQIHVEDTERFRAIGNPVSTIVAELLDFFLEYHKDEKWGFVGAPLHDPCTIAWLLKPELFTTVERWVGVETQGKYTQGMTVVDYYYLTGNKPNATVMVDVDRQGFVDLLADRLKFYA.

The active site involves histidine 240.

It belongs to the IUNH family. RihA subfamily.

In terms of biological role, hydrolyzes with equal efficiency cytidine or uridine to ribose and cytosine or uracil, respectively. The sequence is that of Pyrimidine-specific ribonucleoside hydrolase RihA from Escherichia coli (strain SMS-3-5 / SECEC).